A 143-amino-acid chain; its full sequence is Ribosome-binding factor A (143 aa).

The tract at residues 117-143 (DAEIARRSQGAMPAGEADPYRHSDEEE) is disordered. Positions 134 to 143 (DPYRHSDEEE) are enriched in basic and acidic residues.

The protein belongs to the RbfA family. Monomer. Binds 30S ribosomal subunits, but not 50S ribosomal subunits or 70S ribosomes.

It localises to the cytoplasm. One of several proteins that assist in the late maturation steps of the functional core of the 30S ribosomal subunit. Associates with free 30S ribosomal subunits (but not with 30S subunits that are part of 70S ribosomes or polysomes). Required for efficient processing of 16S rRNA. May interact with the 5'-terminal helix region of 16S rRNA. The polypeptide is Ribosome-binding factor A (Cutibacterium acnes (strain DSM 16379 / KPA171202) (Propionibacterium acnes)).